The primary structure comprises 221 residues: Ependymin-1 (221 aa).

Residues 1-21 (MQAFAVAALSIWLCLGATTLA) form the signal peptide. N-linked (GlcNAc...) asparagine glycans are attached at residues Asn-33, Asn-73, and Asn-97.

The protein belongs to the ependymin family. In terms of processing, binds calcium through the terminal sialic acids. In terms of tissue distribution, EPDs are synthesized in the meninx and secreted in the cerebrospinal fluid.

The protein resides in the secreted. May play a role in neural plasticity. May be involved during axon regeneration. This is Ependymin-1 (epd1) from Oncorhynchus mykiss (Rainbow trout).